A 302-amino-acid polypeptide reads, in one-letter code: Sulfate adenylyltransferase subunit 2 (302 aa).

The protein belongs to the PAPS reductase family. CysD subfamily. Heterodimer composed of CysD, the smaller subunit, and CysN.

It catalyses the reaction sulfate + ATP + H(+) = adenosine 5'-phosphosulfate + diphosphate. It participates in sulfur metabolism; hydrogen sulfide biosynthesis; sulfite from sulfate: step 1/3. With CysN forms the ATP sulfurylase (ATPS) that catalyzes the adenylation of sulfate producing adenosine 5'-phosphosulfate (APS) and diphosphate, the first enzymatic step in sulfur assimilation pathway. APS synthesis involves the formation of a high-energy phosphoric-sulfuric acid anhydride bond driven by GTP hydrolysis by CysN coupled to ATP hydrolysis by CysD. This Proteus mirabilis (strain HI4320) protein is Sulfate adenylyltransferase subunit 2.